A 465-amino-acid chain; its full sequence is Cysteine--tRNA ligase (465 aa).

C27 is a Zn(2+) binding site. Positions 29–39 (PTVYNFFHIGN) match the 'HIGH' region motif. Residues C207, H232, and E236 each coordinate Zn(2+). A 'KMSKS' region motif is present at residues 264-268 (KMSKS). K267 contributes to the ATP binding site.

It belongs to the class-I aminoacyl-tRNA synthetase family. Monomer. Zn(2+) is required as a cofactor.

The protein resides in the cytoplasm. It catalyses the reaction tRNA(Cys) + L-cysteine + ATP = L-cysteinyl-tRNA(Cys) + AMP + diphosphate. In Clostridium botulinum (strain Okra / Type B1), this protein is Cysteine--tRNA ligase.